The primary structure comprises 506 residues: ATP synthase subunit alpha (506 aa).

An ATP-binding site is contributed by 170–177 (GDRQTGKT).

This sequence belongs to the ATPase alpha/beta chains family. In terms of assembly, F-type ATPases have 2 components, CF(1) - the catalytic core - and CF(0) - the membrane proton channel. CF(1) has five subunits: alpha(3), beta(3), gamma(1), delta(1), epsilon(1). CF(0) has four main subunits: a(1), b(1), b'(1) and c(9-12).

It localises to the cellular thylakoid membrane. The enzyme catalyses ATP + H2O + 4 H(+)(in) = ADP + phosphate + 5 H(+)(out). Produces ATP from ADP in the presence of a proton gradient across the membrane. The alpha chain is a regulatory subunit. This is ATP synthase subunit alpha from Synechococcus sp. (strain WH7803).